An 83-amino-acid polypeptide reads, in one-letter code: Large ribosomal subunit protein eL14 (83 aa).

It belongs to the eukaryotic ribosomal protein eL14 family. As to quaternary structure, part of the 50S ribosomal subunit.

The chain is Large ribosomal subunit protein eL14 from Thermococcus kodakarensis (strain ATCC BAA-918 / JCM 12380 / KOD1) (Pyrococcus kodakaraensis (strain KOD1)).